The chain runs to 333 residues: T-cell surface glycoprotein CD1b (333 aa).

An N-terminal signal peptide occupies residues 1–18; sequence MLLLPFQLLAVLFPGGNS. Over 19–303 the chain is Extracellular; the sequence is EHAFQGPTSF…YWSNPTSIGS (285 aa). 3 N-linked (GlcNAc...) asparagine glycosylation sites follow: asparagine 38, asparagine 75, and asparagine 146. 3 disulfides stabilise this stretch: cysteine 120-cysteine 184, cysteine 149-cysteine 163, and cysteine 224-cysteine 279. The 111-residue stretch at 185-295 folds into the Ig-like domain; the sequence is PRYLLGVLNA…LEGQDIILYW (111 aa). Residue asparagine 258 is glycosylated (N-linked (GlcNAc...) asparagine). Residues 304-324 traverse the membrane as a helical segment; the sequence is IVLAIIVPSLLLLLCLALWYM. Over 325–333 the chain is Cytoplasmic; it reads RRRSYQNIP. Residues 329-332 carry the Internalization signal motif; that stretch reads YQNI.

In terms of assembly, heterodimer with B2M (beta-2-microglobulin). Interacts with saposin C. Expressed in lymphocytes, spleen, lung, liver, kidney and heart.

The protein localises to the cell membrane. Its subcellular location is the endosome membrane. The protein resides in the lysosome membrane. In terms of biological role, antigen-presenting protein that binds self and non-self lipid and glycolipid antigens and presents them to T-cell receptors on natural killer T-cells. This Aotus nancymaae (Ma's night monkey) protein is T-cell surface glycoprotein CD1b (CD1B).